A 156-amino-acid polypeptide reads, in one-letter code: Small ribosomal subunit protein uS7 (156 aa).

The protein belongs to the universal ribosomal protein uS7 family. As to quaternary structure, part of the 30S ribosomal subunit. Contacts proteins S9 and S11.

Functionally, one of the primary rRNA binding proteins, it binds directly to 16S rRNA where it nucleates assembly of the head domain of the 30S subunit. Is located at the subunit interface close to the decoding center, probably blocks exit of the E-site tRNA. In Janthinobacterium sp. (strain Marseille) (Minibacterium massiliensis), this protein is Small ribosomal subunit protein uS7.